Here is a 391-residue protein sequence, read N- to C-terminus: Argininosuccinate synthase (391 aa).

6–14 (AYSGGLDTT) lines the ATP pocket. L-citrulline is bound at residue Y84. An ATP-binding site is contributed by G114. Positions 116, 120, and 121 each coordinate L-aspartate. An L-citrulline-binding site is contributed by N120. L-citrulline is bound by residues R124, S171, S180, E253, and Y265.

This sequence belongs to the argininosuccinate synthase family. Type 1 subfamily. In terms of assembly, homotetramer.

Its subcellular location is the cytoplasm. The enzyme catalyses L-citrulline + L-aspartate + ATP = 2-(N(omega)-L-arginino)succinate + AMP + diphosphate + H(+). It participates in amino-acid biosynthesis; L-arginine biosynthesis; L-arginine from L-ornithine and carbamoyl phosphate: step 2/3. The sequence is that of Argininosuccinate synthase from Metallosphaera sedula (strain ATCC 51363 / DSM 5348 / JCM 9185 / NBRC 15509 / TH2).